Reading from the N-terminus, the 431-residue chain is MHICIPVTEELQDTLGCRFVLYSVYLEGFLLFKVRYKDLHLWNEQIHRVFGNGLPKFPPKHYLAMTKNMANERRLQLEQYLQQIVTDPVVTSSDIFMDYFRKLQMDTFNMPTVKLILRVYVPDGAAVELDVRTSDSAERVLEAALFRLGVSRELAEYFSLFITHKEAKGPFTVVKRIAAFELPFLTIWNLEDDQFQIEVRKWYMNPSNDVMLMGSTEAIDILYLQAVQEFQMDWTRPTKDQEQKLQHCLKEENKLKFLELMKTVEYYGYLQIASCASDYPECDSEVNVWVGNNEMSCHFHSPGGHTEHLRLNIRDLICWNVSLLQPKKQEVMSPNHQHLEFKFEYQQGSSLKCITIRTEQAFLLSSCLKKMLSEYPVHRSKEELEIQVDRAQATHKFNIRPVQNGVHTKKQTLLKDKAEYCLIDDISDLNL.

Positions Met1 to Thr107 constitute a PX domain.

This sequence belongs to the sorting nexin family.

May be involved in protein trafficking. This Xenopus laevis (African clawed frog) protein is Sorting nexin-31 (snx31).